A 239-amino-acid polypeptide reads, in one-letter code: 4-hydroxy-tetrahydrodipicolinate reductase (239 aa).

NAD(+)-binding positions include 12-17, 94-96, and 118-121; these read GASGRM, GTT, and ASNF. Histidine 150 acts as the Proton donor/acceptor in catalysis. Histidine 151 is a (S)-2,3,4,5-tetrahydrodipicolinate binding site. The active-site Proton donor is the lysine 154. A (S)-2,3,4,5-tetrahydrodipicolinate-binding site is contributed by 160 to 161; the sequence is GT.

It belongs to the DapB family.

It localises to the cytoplasm. It carries out the reaction (S)-2,3,4,5-tetrahydrodipicolinate + NAD(+) + H2O = (2S,4S)-4-hydroxy-2,3,4,5-tetrahydrodipicolinate + NADH + H(+). It catalyses the reaction (S)-2,3,4,5-tetrahydrodipicolinate + NADP(+) + H2O = (2S,4S)-4-hydroxy-2,3,4,5-tetrahydrodipicolinate + NADPH + H(+). Its pathway is amino-acid biosynthesis; L-lysine biosynthesis via DAP pathway; (S)-tetrahydrodipicolinate from L-aspartate: step 4/4. In terms of biological role, catalyzes the conversion of 4-hydroxy-tetrahydrodipicolinate (HTPA) to tetrahydrodipicolinate. This Stenotrophomonas maltophilia (strain K279a) protein is 4-hydroxy-tetrahydrodipicolinate reductase.